The chain runs to 678 residues: Zinc finger protein 334 (678 aa).

In terms of domain architecture, KRAB spans Val8–Glu79. 14 consecutive C2H2-type zinc fingers follow at residues Asn235–His257, Tyr263–His285, Tyr291–His313, Tyr319–His341, Tyr347–His369, Asn375–His397, Tyr403–His425, Tyr431–His453, Tyr459–His481, Tyr542–His564, Tyr570–His592, Tyr598–His620, Tyr626–His648, and Tyr654–His676.

It belongs to the krueppel C2H2-type zinc-finger protein family.

It is found in the nucleus. Functionally, may be involved in transcriptional regulation. This Pongo abelii (Sumatran orangutan) protein is Zinc finger protein 334 (ZNF334).